Consider the following 60-residue polypeptide: Potassium channel toxin alpha-KTx 29.2 (60 aa).

A signal peptide spans 1–28; it reads MKSVCGVLIILVVLTTMLSISTFSTVGA. Intrachain disulfides connect C32/C51, C40/C56, and C44/C58.

It belongs to the short scorpion toxin superfamily. Potassium channel inhibitor family. Alpha-KTx 29 subfamily. In terms of tissue distribution, expressed by the venom gland.

The protein localises to the secreted. Weakly inhibits the Kv1.3/KCNA3 channel (1 uM of thetoxin inhibits currents by 13.2%) and Kv7.1/KCNQ1 channel (10 uM of the toxin inhibits currents by 27.7%). The protein is Potassium channel toxin alpha-KTx 29.2 of Lychas mucronatus (Chinese swimming scorpion).